Here is an 80-residue protein sequence, read N- to C-terminus: MKTANKQTKLHVRKNDTVVVIAGNDKGKTGKVLKAYPQACRVIVEGVNIRKRHVRPSQSHPQGAIIEREFPIHASNVKKG.

The protein belongs to the universal ribosomal protein uL24 family. As to quaternary structure, part of the 50S ribosomal subunit.

Its function is as follows. One of two assembly initiator proteins, it binds directly to the 5'-end of the 23S rRNA, where it nucleates assembly of the 50S subunit. Functionally, one of the proteins that surrounds the polypeptide exit tunnel on the outside of the subunit. The protein is Large ribosomal subunit protein uL24 of Prosthecochloris aestuarii (strain DSM 271 / SK 413).